The following is a 243-amino-acid chain: Pyridoxine 5'-phosphate synthase (243 aa).

Asn-9 is a 3-amino-2-oxopropyl phosphate binding site. 11 to 12 provides a ligand contact to 1-deoxy-D-xylulose 5-phosphate; that stretch reads DH. Arg-20 lines the 3-amino-2-oxopropyl phosphate pocket. The active-site Proton acceptor is the His-45. 1-deoxy-D-xylulose 5-phosphate is bound by residues Arg-47 and His-52. Catalysis depends on Glu-72, which acts as the Proton acceptor. Thr-102 contacts 1-deoxy-D-xylulose 5-phosphate. Catalysis depends on His-193, which acts as the Proton donor. 3-amino-2-oxopropyl phosphate-binding positions include Gly-194 and 215-216; that span reads GH.

This sequence belongs to the PNP synthase family. Homooctamer; tetramer of dimers.

It is found in the cytoplasm. It catalyses the reaction 3-amino-2-oxopropyl phosphate + 1-deoxy-D-xylulose 5-phosphate = pyridoxine 5'-phosphate + phosphate + 2 H2O + H(+). Its pathway is cofactor biosynthesis; pyridoxine 5'-phosphate biosynthesis; pyridoxine 5'-phosphate from D-erythrose 4-phosphate: step 5/5. Its function is as follows. Catalyzes the complicated ring closure reaction between the two acyclic compounds 1-deoxy-D-xylulose-5-phosphate (DXP) and 3-amino-2-oxopropyl phosphate (1-amino-acetone-3-phosphate or AAP) to form pyridoxine 5'-phosphate (PNP) and inorganic phosphate. This chain is Pyridoxine 5'-phosphate synthase, found in Salmonella typhi.